The sequence spans 251 residues: Ubiquinone/menaquinone biosynthesis C-methyltransferase UbiE (251 aa).

S-adenosyl-L-methionine is bound by residues Thr74, Asp95, and 123–124; that span reads NA.

The protein belongs to the class I-like SAM-binding methyltransferase superfamily. MenG/UbiE family.

The enzyme catalyses a 2-demethylmenaquinol + S-adenosyl-L-methionine = a menaquinol + S-adenosyl-L-homocysteine + H(+). It catalyses the reaction a 2-methoxy-6-(all-trans-polyprenyl)benzene-1,4-diol + S-adenosyl-L-methionine = a 5-methoxy-2-methyl-3-(all-trans-polyprenyl)benzene-1,4-diol + S-adenosyl-L-homocysteine + H(+). It participates in quinol/quinone metabolism; menaquinone biosynthesis; menaquinol from 1,4-dihydroxy-2-naphthoate: step 2/2. The protein operates within cofactor biosynthesis; ubiquinone biosynthesis. Methyltransferase required for the conversion of demethylmenaquinol (DMKH2) to menaquinol (MKH2) and the conversion of 2-polyprenyl-6-methoxy-1,4-benzoquinol (DDMQH2) to 2-polyprenyl-3-methyl-6-methoxy-1,4-benzoquinol (DMQH2). In Psychromonas ingrahamii (strain DSM 17664 / CCUG 51855 / 37), this protein is Ubiquinone/menaquinone biosynthesis C-methyltransferase UbiE.